We begin with the raw amino-acid sequence, 153 residues long: Ribonuclease HI (153 aa).

One can recognise an RNase H type-1 domain in the interval M1–N141. D9, E47, D69, and D133 together coordinate Mg(2+).

It belongs to the RNase H family. As to quaternary structure, monomer. The cofactor is Mg(2+).

It localises to the cytoplasm. The enzyme catalyses Endonucleolytic cleavage to 5'-phosphomonoester.. Endonuclease that specifically degrades the RNA of RNA-DNA hybrids. The sequence is that of Ribonuclease HI from Haemophilus ducreyi (strain 35000HP / ATCC 700724).